Here is a 117-residue protein sequence, read N- to C-terminus: Large ribosomal subunit protein eL34 (117 aa).

At S12 the chain carries Phosphoserine. Residues 16–28 show a composition bias toward polar residues; sequence ASNKTRLSRTPGQ. The interval 16–35 is disordered; it reads ASNKTRLSRTPGQQDRLPLH. K108 is covalently cross-linked (Glycyl lysine isopeptide (Lys-Gly) (interchain with G-Cter in SUMO2)).

The protein belongs to the eukaryotic ribosomal protein eL34 family. In terms of assembly, component of the large ribosomal subunit.

The protein resides in the cytoplasm. It is found in the cytosol. It localises to the endoplasmic reticulum. Its function is as follows. Component of the large ribosomal subunit. The ribosome is a large ribonucleoprotein complex responsible for the synthesis of proteins in the cell. The polypeptide is Large ribosomal subunit protein eL34 (RPL34) (Vicugna pacos (Alpaca)).